Consider the following 206-residue polypeptide: ATP phosphoribosyltransferase (206 aa).

Belongs to the ATP phosphoribosyltransferase family. Short subfamily. Heteromultimer composed of HisG and HisZ subunits.

The protein resides in the cytoplasm. The catalysed reaction is 1-(5-phospho-beta-D-ribosyl)-ATP + diphosphate = 5-phospho-alpha-D-ribose 1-diphosphate + ATP. Its pathway is amino-acid biosynthesis; L-histidine biosynthesis; L-histidine from 5-phospho-alpha-D-ribose 1-diphosphate: step 1/9. Functionally, catalyzes the condensation of ATP and 5-phosphoribose 1-diphosphate to form N'-(5'-phosphoribosyl)-ATP (PR-ATP). Has a crucial role in the pathway because the rate of histidine biosynthesis seems to be controlled primarily by regulation of HisG enzymatic activity. The sequence is that of ATP phosphoribosyltransferase from Brachyspira hyodysenteriae (strain ATCC 49526 / WA1).